A 100-amino-acid chain; its full sequence is U12-ctenitoxin-Pn1a (100 aa).

A signal peptide spans 1–28 (MKYRIFKMKYTLLFLSVIALVHIFAVEA). A propeptide spanning residues 29 to 41 (KDEPESDALVPQE) is cleaved from the precursor. Cystine bridges form between C44–C58, C51–C64, C57–C82, C66–C80, and C90–C97.

This sequence belongs to the neurotoxin 09 (Tx3-6) family. In terms of tissue distribution, expressed by the venom gland.

It localises to the secreted. Its function is as follows. Probable neurotoxin. In Phoneutria nigriventer (Brazilian armed spider), this protein is U12-ctenitoxin-Pn1a.